The primary structure comprises 341 residues: Two-component response regulator EHD1 (341 aa).

Residues Arg12–Phe127 form the Response regulatory domain. A 4-aspartylphosphate modification is found at Asp63. In terms of domain architecture, HTH myb-type spans Asp195–Lys254. The H-T-H motif DNA-binding region spans Pro225–Arg250.

Two-component system major event consists of a His-to-Asp phosphorelay between a sensor histidine kinase (HK) and a response regulator (RR). In plants, the His-to-Asp phosphorelay involves an additional intermediate named Histidine-containing phosphotransfer protein (HPt). This multistep phosphorelay consists of a His-Asp-His-Asp sequential transfer of a phosphate group between first a His and an Asp of the HK protein, followed by the transfer to a conserved His of the HPt protein and finally the transfer to an Asp in the receiver domain of the RR protein.

It localises to the nucleus. Functionally, transcriptional activator that acts as a floral inducer to promote short-day (SD) flowering pathway. Activates Hd3a and other FT-like genes independently from Hd1. May also activate MADS-box transcription factors involved in flowering regulation. The sequence is that of Two-component response regulator EHD1 (EHD1) from Oryza sativa subsp. indica (Rice).